The sequence spans 252 residues: Glucosamine-6-phosphate deaminase (252 aa).

D64 serves as the catalytic Proton acceptor; for enolization step. Residue N130 is the For ring-opening step of the active site. The active-site Proton acceptor; for ring-opening step is H132. E137 acts as the For ring-opening step in catalysis.

The protein belongs to the glucosamine/galactosamine-6-phosphate isomerase family. NagB subfamily.

It carries out the reaction alpha-D-glucosamine 6-phosphate + H2O = beta-D-fructose 6-phosphate + NH4(+). It participates in amino-sugar metabolism; N-acetylneuraminate degradation; D-fructose 6-phosphate from N-acetylneuraminate: step 5/5. Its function is as follows. Catalyzes the reversible isomerization-deamination of glucosamine 6-phosphate (GlcN6P) to form fructose 6-phosphate (Fru6P) and ammonium ion. This Exiguobacterium sibiricum (strain DSM 17290 / CCUG 55495 / CIP 109462 / JCM 13490 / 255-15) protein is Glucosamine-6-phosphate deaminase.